We begin with the raw amino-acid sequence, 360 residues long: UDP-N-acetylglucosamine--N-acetylmuramyl-(pentapeptide) pyrophosphoryl-undecaprenol N-acetylglucosamine transferase (360 aa).

UDP-N-acetyl-alpha-D-glucosamine-binding residues include S198 and Q289.

It belongs to the glycosyltransferase 28 family. MurG subfamily.

Its subcellular location is the cell membrane. The catalysed reaction is Mur2Ac(oyl-L-Ala-gamma-D-Glu-L-Lys-D-Ala-D-Ala)-di-trans,octa-cis-undecaprenyl diphosphate + UDP-N-acetyl-alpha-D-glucosamine = beta-D-GlcNAc-(1-&gt;4)-Mur2Ac(oyl-L-Ala-gamma-D-Glu-L-Lys-D-Ala-D-Ala)-di-trans,octa-cis-undecaprenyl diphosphate + UDP + H(+). The protein operates within cell wall biogenesis; peptidoglycan biosynthesis. Functionally, cell wall formation. Catalyzes the transfer of a GlcNAc subunit on undecaprenyl-pyrophosphoryl-MurNAc-pentapeptide (lipid intermediate I) to form undecaprenyl-pyrophosphoryl-MurNAc-(pentapeptide)GlcNAc (lipid intermediate II). This chain is UDP-N-acetylglucosamine--N-acetylmuramyl-(pentapeptide) pyrophosphoryl-undecaprenol N-acetylglucosamine transferase, found in Streptococcus pyogenes serotype M18 (strain MGAS8232).